Here is a 203-residue protein sequence, read N- to C-terminus: MSRYRGPRFKKIRRLGALPGLTSKRPRAGSDPRNQELSGNKSQYRIRLEEKQKLRFHYGLTERQLLKYVRIAGKAKGPTGQVLLQLLEMRLDNILFRLGMASTIPQARQLVNHRHILVNGRIVDIPSYRCKPRDIITAKDDQKSKAMIQNSLESPPHEEVPKHLTFHPFQYKGLVNQIIDSEWVGLKINELLVVEYYSRQTKT.

A disordered region spans residues 15–42 (LGALPGLTSKRPRAGSDPRNQELSGNKS). The S4 RNA-binding domain occupies 89–150 (MRLDNILFRL…DQKSKAMIQN (62 aa)).

The protein belongs to the universal ribosomal protein uS4 family. In terms of assembly, part of the 30S ribosomal subunit. Contacts protein S5. The interaction surface between S4 and S5 is involved in control of translational fidelity.

Its subcellular location is the plastid. The protein resides in the chloroplast. Functionally, one of the primary rRNA binding proteins, it binds directly to 16S rRNA where it nucleates assembly of the body of the 30S subunit. Its function is as follows. With S5 and S12 plays an important role in translational accuracy. The polypeptide is Small ribosomal subunit protein uS4c (rps4) (Oenothera elata subsp. hookeri (Hooker's evening primrose)).